Here is a 321-residue protein sequence, read N- to C-terminus: Lipoyl synthase (321 aa).

7 residues coordinate [4Fe-4S] cluster: cysteine 68, cysteine 73, cysteine 79, cysteine 94, cysteine 98, cysteine 101, and serine 308. Residues 80-297 (FNHGTATFMI…KQEALAMGFT (218 aa)) enclose the Radical SAM core domain.

This sequence belongs to the radical SAM superfamily. Lipoyl synthase family. [4Fe-4S] cluster serves as cofactor.

It localises to the cytoplasm. It catalyses the reaction [[Fe-S] cluster scaffold protein carrying a second [4Fe-4S](2+) cluster] + N(6)-octanoyl-L-lysyl-[protein] + 2 oxidized [2Fe-2S]-[ferredoxin] + 2 S-adenosyl-L-methionine + 4 H(+) = [[Fe-S] cluster scaffold protein] + N(6)-[(R)-dihydrolipoyl]-L-lysyl-[protein] + 4 Fe(3+) + 2 hydrogen sulfide + 2 5'-deoxyadenosine + 2 L-methionine + 2 reduced [2Fe-2S]-[ferredoxin]. It participates in protein modification; protein lipoylation via endogenous pathway; protein N(6)-(lipoyl)lysine from octanoyl-[acyl-carrier-protein]: step 2/2. Its function is as follows. Catalyzes the radical-mediated insertion of two sulfur atoms into the C-6 and C-8 positions of the octanoyl moiety bound to the lipoyl domains of lipoate-dependent enzymes, thereby converting the octanoylated domains into lipoylated derivatives. This chain is Lipoyl synthase, found in Sodalis glossinidius (strain morsitans).